The sequence spans 318 residues: NADH-ubiquinone oxidoreductase chain 1 (318 aa).

A run of 8 helical transmembrane segments spans residues 2 to 22, 69 to 89, 100 to 120, 146 to 166, 171 to 191, 223 to 243, 253 to 273, and 294 to 314; these read FMIN…FLTL, LMFI…WIPL, LGVL…LWSG, LAII…AMLI, YMWL…STLA, FFLA…ILFF, ELYT…FLWI, and LPLT…TASI.

Belongs to the complex I subunit 1 family. Core subunit of respiratory chain NADH dehydrogenase (Complex I) which is composed of 45 different subunits.

It localises to the mitochondrion inner membrane. The enzyme catalyses a ubiquinone + NADH + 5 H(+)(in) = a ubiquinol + NAD(+) + 4 H(+)(out). In terms of biological role, core subunit of the mitochondrial membrane respiratory chain NADH dehydrogenase (Complex I) which catalyzes electron transfer from NADH through the respiratory chain, using ubiquinone as an electron acceptor. Essential for the catalytic activity and assembly of complex I. The sequence is that of NADH-ubiquinone oxidoreductase chain 1 (MT-ND1) from Felis catus (Cat).